The following is a 119-amino-acid chain: Large ribosomal subunit protein bL20 (119 aa).

It belongs to the bacterial ribosomal protein bL20 family.

In terms of biological role, binds directly to 23S ribosomal RNA and is necessary for the in vitro assembly process of the 50S ribosomal subunit. It is not involved in the protein synthesizing functions of that subunit. The protein is Large ribosomal subunit protein bL20 of Dehalococcoides mccartyi (strain ATCC BAA-2100 / JCM 16839 / KCTC 5957 / BAV1).